Consider the following 170-residue polypeptide: N-glycosidase R617 (170 aa).

Belongs to the YbiA family.

It catalyses the reaction 2,5-diamino-6-hydroxy-4-(5-phosphoribosylamino)-pyrimidine + H2O = 2,5,6-triamino-4-hydroxypyrimidine + D-ribose 5-phosphate. The catalysed reaction is 5-amino-6-(5-phospho-D-ribosylamino)uracil + H2O = 5,6-diaminouracil + D-ribose 5-phosphate. Catalyzes the hydrolysis of the N-glycosidic bond in the first two intermediates of riboflavin biosynthesis, which are highly reactive metabolites, yielding relatively innocuous products. Thus, can divert a surplus of harmful intermediates into relatively harmless products and pre-empt the damage these intermediates would otherwise do. May act on other substrates in vivo. This Acanthamoeba polyphaga mimivirus (APMV) protein is N-glycosidase R617.